The following is a 132-amino-acid chain: Ribonuclease P protein component 4 (132 aa).

Residues cysteine 67, cysteine 70, cysteine 96, and cysteine 99 each contribute to the Zn(2+) site.

This sequence belongs to the eukaryotic/archaeal RNase P protein component 4 family. Consists of a catalytic RNA component and at least 4-5 protein subunits. It depends on Zn(2+) as a cofactor.

The protein localises to the cytoplasm. The enzyme catalyses Endonucleolytic cleavage of RNA, removing 5'-extranucleotides from tRNA precursor.. In terms of biological role, part of ribonuclease P, a protein complex that generates mature tRNA molecules by cleaving their 5'-ends. This Thermococcus kodakarensis (strain ATCC BAA-918 / JCM 12380 / KOD1) (Pyrococcus kodakaraensis (strain KOD1)) protein is Ribonuclease P protein component 4.